The primary structure comprises 409 residues: Probable tRNA pseudouridine synthase D (409 aa).

Asp-73 serves as the catalytic Nucleophile. A TRUD domain is found at 146–365; it reads GFPNFFGDQR…SSGDRRIISA (220 aa).

It belongs to the pseudouridine synthase TruD family.

It catalyses the reaction uridine(13) in tRNA = pseudouridine(13) in tRNA. Its function is as follows. Could be responsible for synthesis of pseudouridine from uracil-13 in transfer RNAs. This is Probable tRNA pseudouridine synthase D from Thermoplasma volcanium (strain ATCC 51530 / DSM 4299 / JCM 9571 / NBRC 15438 / GSS1).